A 397-amino-acid polypeptide reads, in one-letter code: Acetate kinase (397 aa).

Asparagine 8 provides a ligand contact to Mg(2+). Lysine 15 is a binding site for ATP. Arginine 92 contacts substrate. The active-site Proton donor/acceptor is the aspartate 149. ATP contacts are provided by residues 209-213, 283-285, and 331-335; these read HLGNG, DFR, and GVGEN. Glutamate 385 contributes to the Mg(2+) binding site.

The protein belongs to the acetokinase family. Homodimer. The cofactor is Mg(2+). Mn(2+) serves as cofactor.

The protein localises to the cytoplasm. It catalyses the reaction acetate + ATP = acetyl phosphate + ADP. It participates in metabolic intermediate biosynthesis; acetyl-CoA biosynthesis; acetyl-CoA from acetate: step 1/2. Functionally, catalyzes the formation of acetyl phosphate from acetate and ATP. Can also catalyze the reverse reaction. This Corynebacterium glutamicum (strain R) protein is Acetate kinase.